The following is a 554-amino-acid chain: Glypican-1 (554 aa).

The signal sequence occupies residues 1–21 (MERLCWGWWWHLGILCLMHWA). 7 disulfide bridges follow: Cys32/Cys68, Cys62/Cys256, Cys69/Cys259, Cys191/Cys343, Cys246/Cys279, Cys268/Cys415, and Cys272/Cys401. Asn79 and Asn116 each carry an N-linked (GlcNAc...) asparagine glycan. Residues 346–369 (PKKTNKGSKSEERRRKGKATQEDK) form a disordered region. Residues 353–369 (SKSEERRRKGKATQEDK) are compositionally biased toward basic and acidic residues. 3 O-linked (Xyl...) (heparan sulfate) serine glycosylation sites follow: Ser486, Ser488, and Ser490.

Belongs to the glypican family. In terms of processing, O-glycosylated with heparan sulfate side chains.

The protein resides in the cell membrane. The protein localises to the secreted. Its subcellular location is the extracellular space. Functionally, cell surface proteoglycan that bears heparan sulfate. This is Glypican-1 (gpc1) from Xenopus tropicalis (Western clawed frog).